A 169-amino-acid chain; its full sequence is S-ribosylhomocysteine lyase (169 aa).

The Fe cation site is built by H54, H58, and C128.

The protein belongs to the LuxS family. As to quaternary structure, homodimer. Fe cation serves as cofactor.

It catalyses the reaction S-(5-deoxy-D-ribos-5-yl)-L-homocysteine = (S)-4,5-dihydroxypentane-2,3-dione + L-homocysteine. Functionally, involved in the synthesis of autoinducer 2 (AI-2) which is secreted by bacteria and is used to communicate both the cell density and the metabolic potential of the environment. The regulation of gene expression in response to changes in cell density is called quorum sensing. Catalyzes the transformation of S-ribosylhomocysteine (RHC) to homocysteine (HC) and 4,5-dihydroxy-2,3-pentadione (DPD). This chain is S-ribosylhomocysteine lyase, found in Shewanella loihica (strain ATCC BAA-1088 / PV-4).